A 331-amino-acid polypeptide reads, in one-letter code: Beta-ketoacyl-[acyl-carrier-protein] synthase III (331 aa).

Residues C113 and H253 contribute to the active site. Positions Q254–R258 are ACP-binding. Residue N283 is part of the active site.

This sequence belongs to the thiolase-like superfamily. FabH family. Homodimer.

The protein localises to the cytoplasm. The enzyme catalyses malonyl-[ACP] + acetyl-CoA + H(+) = 3-oxobutanoyl-[ACP] + CO2 + CoA. Its pathway is lipid metabolism; fatty acid biosynthesis. Its function is as follows. Catalyzes the condensation reaction of fatty acid synthesis by the addition to an acyl acceptor of two carbons from malonyl-ACP. Catalyzes the first condensation reaction which initiates fatty acid synthesis and may therefore play a role in governing the total rate of fatty acid production. Possesses both acetoacetyl-ACP synthase and acetyl transacylase activities. Its substrate specificity determines the biosynthesis of branched-chain and/or straight-chain of fatty acids. In Desulfitobacterium hafniense (strain Y51), this protein is Beta-ketoacyl-[acyl-carrier-protein] synthase III.